We begin with the raw amino-acid sequence, 156 residues long: Snaclec alboaggregin-B subunit alpha (156 aa).

The signal sequence occupies residues 1-23; the sequence is MGRFIFVSFGLLVVFLSLSGTGA. Residues 24–151 enclose the C-type lectin domain; that stretch reads DCPSDWSSFK…CEQKHIFMCK (128 aa). 3 disulfides stabilise this stretch: Cys25-Cys36, Cys53-Cys150, and Cys125-Cys142.

It belongs to the snaclec family. In terms of assembly, heterodimer of subunits alpha and beta; disulfide-linked. As to expression, expressed by the venom gland.

It localises to the secreted. Its function is as follows. Weakly agglutinates platelets at high doses by binding to GPIbalpha (GP1BA). This Trimeresurus albolabris (White-lipped pit viper) protein is Snaclec alboaggregin-B subunit alpha.